The primary structure comprises 1131 residues: Probable secreted beta-glucosidase adg3 (1131 aa).

Positions 1 to 23 are cleaved as a signal peptide; that stretch reads MPSKIEKICLLLLGFTAASNVNA. N-linked (GlcNAc...) asparagine glycosylation is found at N58, N123, N252, N551, N593, N631, and N689. Residues 609–819 are disordered; it reads GTTSSTSEIV…SSPISSNSVT (211 aa). The span at 623–715 shows a compositional bias: low complexity; that stretch reads SNSNTGSLNG…YSDPTTTITS (93 aa). The span at 716 to 725 shows a compositional bias: polar residues; that stretch reads EVSSILSSPT. The span at 726-737 shows a compositional bias: low complexity; it reads SMQSSVSRPQSS. Residues 738–763 show a composition bias toward polar residues; that stretch reads GDASGFNTIFTSISQSSDGETSGYTI. Composition is skewed to low complexity over residues 764 to 773 and 780 to 819; these read SSNSSQNSAS and TSSSSSATPTITQSSISTSVSSQSSMNSSYSSPISSNSVT. N766, N806, and N857 each carry an N-linked (GlcNAc...) asparagine glycan. Residues 893–909 are compositionally biased toward low complexity; it reads STSNSGSTSYSIPSSSS. The segment at 893-918 is disordered; sequence STSNSGSTSYSIPSSSSRNEGTTSYS. The N-linked (GlcNAc...) asparagine glycan is linked to N920. Residues 977–1027 show a composition bias toward low complexity; it reads LTVKPESSLSSSTTSGLTSSSSTIPSSTRSESNSESASTSSASKRSSSSTS. Positions 977–1031 are disordered; that stretch reads LTVKPESSLSSSTTSGLTSSSSTIPSSTRSESNSESASTSSASKRSSSSTSLVQS.

The protein belongs to the SUN family.

It is found in the secreted. In terms of biological role, cell surface beta-glucosidase involved in cell wall biogenesis,. This Schizosaccharomyces pombe (strain 972 / ATCC 24843) (Fission yeast) protein is Probable secreted beta-glucosidase adg3 (adg3).